The sequence spans 84 residues: U8-theraphotoxin-Hhn1f (84 aa).

The first 21 residues, 1 to 21 (MKVVLLVCLVWMMAMMELVSC), serve as a signal peptide directing secretion. Intrachain disulfides connect C23-C35, C29-C44, C34-C67, C54-C75, and C69-C81.

Belongs to the AVIT (prokineticin) family. In terms of tissue distribution, expressed by the venom gland.

The protein localises to the secreted. This Cyriopagopus hainanus (Chinese bird spider) protein is U8-theraphotoxin-Hhn1f.